The primary structure comprises 108 residues: Peptidyl-prolyl cis-trans isomerase FKBP1A (108 aa).

Position 10 is a phosphoserine (Ser10). A PPIase FKBP-type domain is found at 20–108; sequence GQTCVVHYTG…VFDVELLKLE (89 aa). Lys53 is subject to N6-acetyllysine; alternate. An N6-succinyllysine; alternate modification is found at Lys53.

This sequence belongs to the FKBP-type PPIase family. FKBP1 subfamily. As to quaternary structure, interacts with TGFBR1; prevents TGFBR1 phosphorylation by TGFBR2 and stabilizes it in the inactive conformation. Interacts with ACVR1B and SMAD7. Identified in a complex composed of RYR1, PDE4D, PKA, FKBP1A and protein phosphatase 1 (PP1). Interacts directly with RYR2. Interacts directly with RYR3. Interacts directly with RYR1. Interacts with GLMN; rapamycin and FK506 abolish the interaction with GLMN in a dose dependent manner. In terms of tissue distribution, ubiquitous.

It is found in the cytoplasm. It localises to the cytosol. The protein localises to the sarcoplasmic reticulum membrane. It catalyses the reaction [protein]-peptidylproline (omega=180) = [protein]-peptidylproline (omega=0). With respect to regulation, inhibited by both FK506 and rapamycin. Functionally, keeps in an inactive conformation TGFBR1, the TGF-beta type I serine/threonine kinase receptor, preventing TGF-beta receptor activation in absence of ligand. Recruits SMAD7 to ACVR1B which prevents the association of SMAD2 and SMAD3 with the activin receptor complex, thereby blocking the activin signal. May modulate the RYR1 calcium channel activity. PPIases accelerate the folding of proteins. It catalyzes the cis-trans isomerization of proline imidic peptide bonds in oligopeptides. The polypeptide is Peptidyl-prolyl cis-trans isomerase FKBP1A (Fkbp1a) (Rattus norvegicus (Rat)).